The primary structure comprises 420 residues: Fasciclin-like arabinogalactan protein 8 (420 aa).

Residues 1–25 (MAASQTFSLLAFTFSLLAFASTVSS) form the signal peptide. 2 consecutive FAS1 domains span residues 26 to 172 (HNIT…DAPI) and 186 to 326 (SLSN…DNVL). N-linked (GlcNAc...) asparagine glycans are attached at residues asparagine 27, asparagine 128, asparagine 162, asparagine 189, and asparagine 273. The disordered stretch occupies residues 335–394 (SKSPSPAPAPEPVTAPTPSPADAPSPTAASPPAPPTDESPESAPSDSPTGSANSKSANAA). Pro residues predominate over residues 339 to 371 (SPAPAPEPVTAPTPSPADAPSPTAASPPAPPTD). Asparagine 392 carries the GPI-anchor amidated asparagine lipid modification. Residues 393 to 420 (AAVGVSTPSLFTALVTIAAIAVSVSLCS) constitute a propeptide, removed in mature form.

The protein belongs to the fasciclin-like AGP family. As to expression, expressed mainly in flowers and to a lesser extent in leaves and roots.

Its subcellular location is the cell membrane. Functionally, may be a cell surface adhesion protein. The polypeptide is Fasciclin-like arabinogalactan protein 8 (FLA8) (Arabidopsis thaliana (Mouse-ear cress)).